The chain runs to 157 residues: 2-C-methyl-D-erythritol 2,4-cyclodiphosphate synthase (157 aa).

Residues D9 and H11 each coordinate a divalent metal cation. Residues 9 to 11 (DVH) and 35 to 36 (HS) contribute to the 4-CDP-2-C-methyl-D-erythritol 2-phosphate site. H43 contacts a divalent metal cation. Residues 57–59 (DIG), 62–66 (FPDTD), 101–107 (AEKPKMA), 133–136 (TTTE), F140, and R143 contribute to the 4-CDP-2-C-methyl-D-erythritol 2-phosphate site.

Belongs to the IspF family. In terms of assembly, homotrimer. The cofactor is a divalent metal cation.

The enzyme catalyses 4-CDP-2-C-methyl-D-erythritol 2-phosphate = 2-C-methyl-D-erythritol 2,4-cyclic diphosphate + CMP. It participates in isoprenoid biosynthesis; isopentenyl diphosphate biosynthesis via DXP pathway; isopentenyl diphosphate from 1-deoxy-D-xylulose 5-phosphate: step 4/6. Involved in the biosynthesis of isopentenyl diphosphate (IPP) and dimethylallyl diphosphate (DMAPP), two major building blocks of isoprenoid compounds. Catalyzes the conversion of 4-diphosphocytidyl-2-C-methyl-D-erythritol 2-phosphate (CDP-ME2P) to 2-C-methyl-D-erythritol 2,4-cyclodiphosphate (ME-CPP) with a corresponding release of cytidine 5-monophosphate (CMP). This is 2-C-methyl-D-erythritol 2,4-cyclodiphosphate synthase from Listeria monocytogenes serotype 4a (strain HCC23).